We begin with the raw amino-acid sequence, 125 residues long: Ribosome-binding factor A (125 aa).

It belongs to the RbfA family. Monomer. Binds 30S ribosomal subunits, but not 50S ribosomal subunits or 70S ribosomes.

The protein localises to the cytoplasm. In terms of biological role, one of several proteins that assist in the late maturation steps of the functional core of the 30S ribosomal subunit. Associates with free 30S ribosomal subunits (but not with 30S subunits that are part of 70S ribosomes or polysomes). Required for efficient processing of 16S rRNA. May interact with the 5'-terminal helix region of 16S rRNA. This is Ribosome-binding factor A from Paracidovorax citrulli (strain AAC00-1) (Acidovorax citrulli).